The sequence spans 201 residues: Large ribosomal subunit protein uL4 (201 aa).

The segment at 44 to 71 is disordered; the sequence is RAQKTRAEVTGSGKKPWRQKGTGRARSG.

The protein belongs to the universal ribosomal protein uL4 family. As to quaternary structure, part of the 50S ribosomal subunit.

In terms of biological role, one of the primary rRNA binding proteins, this protein initially binds near the 5'-end of the 23S rRNA. It is important during the early stages of 50S assembly. It makes multiple contacts with different domains of the 23S rRNA in the assembled 50S subunit and ribosome. Its function is as follows. Forms part of the polypeptide exit tunnel. The sequence is that of Large ribosomal subunit protein uL4 from Edwardsiella ictaluri (strain 93-146).